The sequence spans 344 residues: MATELSALPANHPRVTFGKVGVLLVNLGTPDGTDYWPMRRYLAEFLSDKRVIEWSRLYWYPILYGIVLNKRPQKVGKAYEEIWNHERNESYLRTYTRSQGELMAAALKDFPNVVVDWAMRYGQPSIASRIDALKEQGCEKILLFPLYPQYAASTTATVNDKAFEHLMKLRWQPAIRTVPPYHDDPAYIEGLAASVKNHLATLDWEPEMLITSFHGIPQSYFKKGDPYYCHCQKTARLLREALGRTEKNFMITFQSRFGPEEWLQPYTDKTVEKLASEGIKRIAVMNPGFVSDCLETLEEIAGEAGEIFLHNGGEKFTHIPCLNDSTEGMNVLEKVVRRELQGWV.

Fe cation is bound by residues His-214 and Glu-295.

This sequence belongs to the ferrochelatase family.

It localises to the cytoplasm. It catalyses the reaction heme b + 2 H(+) = protoporphyrin IX + Fe(2+). Its pathway is porphyrin-containing compound metabolism; protoheme biosynthesis; protoheme from protoporphyrin-IX: step 1/1. Its function is as follows. Catalyzes the ferrous insertion into protoporphyrin IX. This is Ferrochelatase from Agrobacterium fabrum (strain C58 / ATCC 33970) (Agrobacterium tumefaciens (strain C58)).